The sequence spans 470 residues: tRNA-2-methylthio-N(6)-dimethylallyladenosine synthase (470 aa).

An MTTase N-terminal domain is found at 5 to 122 (RKLYVKSFGC…LPELLAEAKA (118 aa)). 6 residues coordinate [4Fe-4S] cluster: Cys-14, Cys-50, Cys-85, Cys-163, Cys-167, and Cys-170. A Radical SAM core domain is found at 149–383 (RSRGPAAFVT…LLEASKAAFD (235 aa)). A TRAM domain is found at 384 to 446 (ESCRGRTFDI…PNSLAGVPAE (63 aa)). The tract at residues 439-470 (SLAGVPAEASEPSVSQSPVSSARSRPLAAMEA) is disordered. Residues 444–464 (PAEASEPSVSQSPVSSARSRP) show a composition bias toward low complexity.

This sequence belongs to the methylthiotransferase family. MiaB subfamily. As to quaternary structure, monomer. The cofactor is [4Fe-4S] cluster.

The protein resides in the cytoplasm. It carries out the reaction N(6)-dimethylallyladenosine(37) in tRNA + (sulfur carrier)-SH + AH2 + 2 S-adenosyl-L-methionine = 2-methylsulfanyl-N(6)-dimethylallyladenosine(37) in tRNA + (sulfur carrier)-H + 5'-deoxyadenosine + L-methionine + A + S-adenosyl-L-homocysteine + 2 H(+). Catalyzes the methylthiolation of N6-(dimethylallyl)adenosine (i(6)A), leading to the formation of 2-methylthio-N6-(dimethylallyl)adenosine (ms(2)i(6)A) at position 37 in tRNAs that read codons beginning with uridine. The polypeptide is tRNA-2-methylthio-N(6)-dimethylallyladenosine synthase (Xanthobacter autotrophicus (strain ATCC BAA-1158 / Py2)).